The following is a 1555-amino-acid chain: Glycogen debranching enzyme (1555 aa).

Phosphoserine is present on S87. Catalysis depends on residues D549, H552, and D650.

This sequence belongs to the glycogen debranching enzyme family. As to quaternary structure, monomer. Interacts with NHLRC1/malin. Post-translationally, the N-terminus is blocked. In terms of processing, ubiquitinated.

The protein resides in the cytoplasm. It catalyses the reaction Transfers a segment of a (1-&gt;4)-alpha-D-glucan to a new position in an acceptor, which may be glucose or a (1-&gt;4)-alpha-D-glucan.. The enzyme catalyses Hydrolysis of (1-&gt;6)-alpha-D-glucosidic branch linkages in glycogen phosphorylase limit dextrin.. Its function is as follows. Multifunctional enzyme acting as 1,4-alpha-D-glucan:1,4-alpha-D-glucan 4-alpha-D-glycosyltransferase and amylo-1,6-glucosidase in glycogen degradation. This chain is Glycogen debranching enzyme (AGL), found in Oryctolagus cuniculus (Rabbit).